We begin with the raw amino-acid sequence, 249 residues long: Exosome complex component Rrp41 (249 aa).

The protein belongs to the RNase PH family. Rrp41 subfamily. Component of the archaeal exosome complex. Forms a hexameric ring-like arrangement composed of 3 Rrp41-Rrp42 heterodimers. The hexameric ring associates with a trimer of Rrp4 and/or Csl4 subunits.

It is found in the cytoplasm. Its function is as follows. Catalytic component of the exosome, which is a complex involved in RNA degradation. Has 3'-&gt;5' exoribonuclease activity. Can also synthesize heteromeric RNA-tails. This chain is Exosome complex component Rrp41, found in Thermococcus kodakarensis (strain ATCC BAA-918 / JCM 12380 / KOD1) (Pyrococcus kodakaraensis (strain KOD1)).